We begin with the raw amino-acid sequence, 398 residues long: UPF0496 protein At5g66660 (398 aa).

2 consecutive transmembrane segments (helical) span residues valine 240–serine 260 and proline 263–phenylalanine 283.

This sequence belongs to the UPF0496 family.

Its subcellular location is the membrane. The polypeptide is UPF0496 protein At5g66660 (Arabidopsis thaliana (Mouse-ear cress)).